The chain runs to 495 residues: 4-aminobutyrate aminotransferase (495 aa).

Pyridoxal 5'-phosphate is bound at residue 160-161 (GS). Residue arginine 216 participates in substrate binding. Residue lysine 350 is modified to N6-(pyridoxal phosphate)lysine. A pyridoxal 5'-phosphate-binding site is contributed by threonine 374.

The protein belongs to the class-III pyridoxal-phosphate-dependent aminotransferase family. As to quaternary structure, homodimer. Pyridoxal 5'-phosphate is required as a cofactor.

The catalysed reaction is 4-aminobutanoate + 2-oxoglutarate = succinate semialdehyde + L-glutamate. The chain is 4-aminobutyrate aminotransferase (gabT) from Dictyostelium discoideum (Social amoeba).